The sequence spans 178 residues: Large ribosomal subunit protein uL6 (178 aa).

This sequence belongs to the universal ribosomal protein uL6 family. As to quaternary structure, part of the 50S ribosomal subunit.

Its function is as follows. This protein binds to the 23S rRNA, and is important in its secondary structure. It is located near the subunit interface in the base of the L7/L12 stalk, and near the tRNA binding site of the peptidyltransferase center. This is Large ribosomal subunit protein uL6 from Helicobacter pylori (strain HPAG1).